The following is a 178-amino-acid chain: Large ribosomal subunit protein uL6 (178 aa).

This sequence belongs to the universal ribosomal protein uL6 family. As to quaternary structure, part of the 50S ribosomal subunit.

This protein binds to the 23S rRNA, and is important in its secondary structure. It is located near the subunit interface in the base of the L7/L12 stalk, and near the tRNA binding site of the peptidyltransferase center. This is Large ribosomal subunit protein uL6 from Thermobifida fusca (strain YX).